The sequence spans 396 residues: 1-deoxy-D-xylulose 5-phosphate reductoisomerase (396 aa).

Residues Thr-10, Gly-11, Ser-12, Ile-13, and Asn-123 each coordinate NADPH. 1-deoxy-D-xylulose 5-phosphate is bound at residue Lys-124. Position 125 (Glu-125) interacts with NADPH. Asp-149 is a Mn(2+) binding site. The 1-deoxy-D-xylulose 5-phosphate site is built by Ser-150, Glu-151, Ser-185, and His-208. Glu-151 contacts Mn(2+). Residue Gly-214 coordinates NADPH. 1-deoxy-D-xylulose 5-phosphate-binding residues include Ser-221, Asn-226, Lys-227, and Glu-230. Mn(2+) is bound at residue Glu-230.

This sequence belongs to the DXR family. The cofactor is Mg(2+). It depends on Mn(2+) as a cofactor.

The enzyme catalyses 2-C-methyl-D-erythritol 4-phosphate + NADP(+) = 1-deoxy-D-xylulose 5-phosphate + NADPH + H(+). It functions in the pathway isoprenoid biosynthesis; isopentenyl diphosphate biosynthesis via DXP pathway; isopentenyl diphosphate from 1-deoxy-D-xylulose 5-phosphate: step 1/6. Its function is as follows. Catalyzes the NADPH-dependent rearrangement and reduction of 1-deoxy-D-xylulose-5-phosphate (DXP) to 2-C-methyl-D-erythritol 4-phosphate (MEP). The sequence is that of 1-deoxy-D-xylulose 5-phosphate reductoisomerase from Shewanella baltica (strain OS223).